A 474-amino-acid chain; its full sequence is MLRSDVRRVAAGRKASLDGLYCEELEVRGNRNLGNKFSHRGELRSSTESEVFDDGTNTFFWRAHTLTVLFILTCSLGYVTLLEETPQDTAYNAKRGIIASILVFLCFGVTQAKDGPFSRPHPAYWRFWLCVSVVYELFLIFILFQTVHDGRQFMKFIDPKLGVPLPERDYGGNCLIYDPGNKTDPYHNLWDKMDGFVPAHFLGWYIKTLMIRDWWMCMIISVMFEFLEYSLEHQLPNFSECWWDHWIMDVLVCNGFGIYCGMKTLEWLSMKPYKWQGLWNIPTYRGKMKRIAFQFTPYSWVKFEWKPASSLRRWLAVCGIIFVFLLAELNTFYLKFVLWMPPEHYLVLLRLVFFVNVGGVAMREIYDFMDDLKFHKKLGQQAWMVAAITVTEFLIVVKYDPYTITLPLPFYVTQCWILGIVLVLTWTVWRFFIRDITLRYKEIRQQKQHRNEEEKSHRNGDVNSEKDTNKHKKH.

The Lumenal segment spans residues 1 to 62 (MLRSDVRRVA…DDGTNTFFWR (62 aa)). The helical transmembrane segment at 63-83 (AHTLTVLFILTCSLGYVTLLE) threads the bilayer. The Cytoplasmic segment spans residues 84–96 (ETPQDTAYNAKRG). Residues 97–117 (IIASILVFLCFGVTQAKDGPF) traverse the membrane as a helical segment. Residues 118-126 (SRPHPAYWR) lie on the Lumenal side of the membrane. The helical transmembrane segment at 127–147 (FWLCVSVVYELFLIFILFQTV) threads the bilayer. The Cytoplasmic segment spans residues 148–313 (HDGRQFMKFI…EWKPASSLRR (166 aa)). A helical membrane pass occupies residues 314 to 334 (WLAVCGIIFVFLLAELNTFYL). Position 335 (lysine 335) is a topological domain, lumenal. A helical membrane pass occupies residues 336-356 (FVLWMPPEHYLVLLRLVFFVN). At 357 to 376 (VGGVAMREIYDFMDDLKFHK) the chain is on the cytoplasmic side. A helical membrane pass occupies residues 377–397 (KLGQQAWMVAAITVTEFLIVV). The Lumenal segment spans residues 398 to 403 (KYDPYT). A helical transmembrane segment spans residues 404 to 424 (ITLPLPFYVTQCWILGIVLVL). Residues 425–474 (TWTVWRFFIRDITLRYKEIRQQKQHRNEEEKSHRNGDVNSEKDTNKHKKH) are Cytoplasmic-facing. Residues 448–468 (QHRNEEEKSHRNGDVNSEKDT) are compositionally biased toward basic and acidic residues. Positions 448–474 (QHRNEEEKSHRNGDVNSEKDTNKHKKH) are disordered.

The protein belongs to the phosphatidyl serine synthase family.

It is found in the endoplasmic reticulum membrane. It catalyses the reaction a 1,2-diacyl-sn-glycero-3-phosphoethanolamine + L-serine = a 1,2-diacyl-sn-glycero-3-phospho-L-serine + ethanolamine. The catalysed reaction is 1-hexadecanoyl-2-(9Z-octadecenoyl)-sn-glycero-3-phosphoethanolamine + L-serine = 1-hexadecanoyl-2-(9Z-octadecenoyl)-sn-glycero-3-phospho-L-serine + ethanolamine. It carries out the reaction 1-hexadecanoyl-2-(4Z,7Z,10Z,13Z,16Z,19Z-docosahexaenoyl)-sn-glycero-3-phosphoethanolamine + L-serine = 1-hexadecanoyl-2-(4Z,7Z,10Z,13Z,16Z,19Z-docosahexaenoyl)-sn-glycero-3-phosphoserine + ethanolamine. The enzyme catalyses 1-octadecanoyl-2-(5Z,8Z,11Z,14Z)-eicosatetraenoyl-sn-glycero-3-phosphoethanolamine + L-serine = 1-octadecanoyl-2-(5Z,8Z,11Z,14Z)-eicosatetraenoyl-sn-glycero-3-phosphoserine + ethanolamine. It catalyses the reaction 1-octadecanoyl-2-(4Z,7Z,10Z,13Z,16Z,19Z-docosahexaenoyl)-sn-glycero-3-phosphoethanolamine + L-serine = 1-octadecanoyl-2-(4Z,7Z,10Z,13Z,16Z,19Z-docosahexaenoyl)-sn-glycero-3-phosphoserine + ethanolamine. The catalysed reaction is 1-(1Z-octadecenyl)-2-(4Z,7Z,10Z,13Z,16Z,19Z-docosahexaenoyl)-sn-glycero-3-phosphoethanolamine + L-serine = 1-(1Z-octadecenyl)-2-(4Z,7Z,10Z,13Z,16Z,19Z-docosahexaenoyl)-sn-glycero-3-phospho-L-serine + ethanolamine. It carries out the reaction 1-octadecanoyl-2-(9Z-octadecenoyl)-sn-glycero-3-phosphoethanolamine + L-serine = 1-octadecanoyl-2-(9Z-octadecenoyl)-sn-glycero-3-phospho-L-serine + ethanolamine. The enzyme catalyses 1-(1Z-octadecenyl)-2-(9Z-octadecenoyl)-sn-glycero-3-phosphoethanolamine + L-serine = 1-(1Z-octadecenyl)-2-(9Z-octadecenoyl)-sn-glycero-3-phospho-L-serine + ethanolamine. It catalyses the reaction 1-(1Z-octadecenyl)-2-(5Z,8Z,11Z,14Z- eicosatetraenoyl)-sn-glycero-3-phosphoethanolamine + L-serine = 1-(1Z-octadecenyl)-2-(5Z,8Z,11Z,14Z-eicosatetraenoyl)-sn-glycero-3-phospho-L-serine + ethanolamine. The protein operates within phospholipid metabolism; phosphatidylserine biosynthesis. Catalyzes a base-exchange reaction in which the polar head group of phosphatidylethanolamine (PE) or phosphatidylcholine (PC) is replaced by L-serine. Catalyzes the conversion of phosphatatidylethanolamine and does not act on phosphatidylcholine. Can utilize both phosphatidylethanolamine (PE) plasmalogen and diacyl PE as substrate and the latter is six times better utilized, indicating the importance of an ester linkage at the sn-1 position. Although it shows no sn-1 fatty acyl preference, exhibits significant preference towards docosahexaenoic acid (22:6n-3) compared with 18:1 or 20:4 at the sn-2 position. The protein is Phosphatidylserine synthase 2 (ptdss2) of Xenopus tropicalis (Western clawed frog).